The primary structure comprises 165 residues: Nucleotide-binding protein P9215_05621 (165 aa).

Belongs to the YajQ family.

Functionally, nucleotide-binding protein. In Prochlorococcus marinus (strain MIT 9215), this protein is Nucleotide-binding protein P9215_05621.